The sequence spans 111 residues: Ig kappa chain V-III region PC 7175 (111 aa).

The segment at 1 to 23 (DIVLTQSPASLAVSLGQRATISC) is framework-1. The cysteines at positions 23 and 92 are disulfide-linked. Residues 24 to 38 (RASKSVSTSGYSYMH) are complementarity-determining-1. Residues 39-53 (WYQQKPGQPPKLLIY) form a framework-2 region. The segment at 54-60 (LASNLES) is complementarity-determining-2. Positions 61–92 (GVPARFSGSGSGTDFTLNIHPVEEEDAATYYC) are framework-3. Positions 93-101 (QHSRELPLT) are complementarity-determining-3. The segment at 102 to 111 (FGAGTKLELK) is framework-4.

This is Ig kappa chain V-III region PC 7175 from Mus musculus (Mouse).